The following is a 105-amino-acid chain: MYALIEYKGKQYKVERGSSIVVDNISEVAPGGCIDVREVLMIGGEGLTRIGSPYLEGVGVRAVVGECFRSRKITVYKYKSKKDYHRTIGHRQWYTRLTVSDILGV.

It belongs to the bacterial ribosomal protein bL21 family. Part of the 50S ribosomal subunit. Contacts protein L20.

In terms of biological role, this protein binds to 23S rRNA in the presence of protein L20. The sequence is that of Large ribosomal subunit protein bL21 from Treponema pallidum (strain Nichols).